A 221-amino-acid polypeptide reads, in one-letter code: Sugar transporter SWEET1 (221 aa).

Transmembrane regions (helical) follow at residues 3–23 (AGGFLDSLIYGACVVFTLGMF), 42–62 (VQFLPFLTTEVNNLGWLSYGA), 68–88 (ILIVVNTVGAALQTLYILAYL), 96–116 (VVLLQTATLLGVLLLGYGYFW), 129–149 (LGLFCSVFTISMYLSPLADLA), 160–180 (LSYPLTIATLLTSASWCLYGF), and 186–206 (YIMVSNFPGIVTSFIRFWLFW). The 85-residue stretch at 10-94 (LIYGACVVFT…LAYLHYCPRK (85 aa)) folds into the MtN3/slv 1 domain. The MtN3/slv 2 domain occupies 127–212 (QQLGLFCSVF…WLFWKYPQEQ (86 aa)). The segment at 149–221 (AKVIQTKSTQ…QDRNYWLLQT (73 aa)) is mediates interaction with TRPV2.

It belongs to the SWEET sugar transporter family. Interacts with TRPV2; the interaction probably occurs intracellularly and depends on TRPV2 N-glycosylation. Ubiquitously expressed with highest expression in oviduct, epididymis and intestine.

Its subcellular location is the golgi apparatus membrane. The protein localises to the cell membrane. Functionally, mediates sugar transport across membranes. May stimulate V(D)J recombination by the activation of RAG1. This is Sugar transporter SWEET1 (SLC50A1) from Homo sapiens (Human).